Reading from the N-terminus, the 454-residue chain is Bifunctional protein GlmU (454 aa).

Residues 1–226 (MALNVVILAA…AIEVEGANNR (226 aa)) form a pyrophosphorylase region. UDP-N-acetyl-alpha-D-glucosamine-binding positions include 8–11 (LAAG), Lys22, Gln73, 78–79 (GT), 100–102 (YGD), Gly137, Glu151, Asn166, and Asn224. Asp102 contacts Mg(2+). Residue Asn224 participates in Mg(2+) binding. A linker region spans residues 227 to 247 (VQLAQLERAYQAREAEKLMIA). The tract at residues 248–454 (GANLRDPSRI…GWQRPVKIKK (207 aa)) is N-acetyltransferase. Residues Arg330 and Lys348 each contribute to the UDP-N-acetyl-alpha-D-glucosamine site. His360 functions as the Proton acceptor in the catalytic mechanism. Positions 363 and 374 each coordinate UDP-N-acetyl-alpha-D-glucosamine. Acetyl-CoA is bound by residues Ala377, 383 to 384 (NY), Ser402, Ala420, and Arg437.

This sequence in the N-terminal section; belongs to the N-acetylglucosamine-1-phosphate uridyltransferase family. In the C-terminal section; belongs to the transferase hexapeptide repeat family. As to quaternary structure, homotrimer. Mg(2+) serves as cofactor.

The protein resides in the cytoplasm. It carries out the reaction alpha-D-glucosamine 1-phosphate + acetyl-CoA = N-acetyl-alpha-D-glucosamine 1-phosphate + CoA + H(+). The catalysed reaction is N-acetyl-alpha-D-glucosamine 1-phosphate + UTP + H(+) = UDP-N-acetyl-alpha-D-glucosamine + diphosphate. It functions in the pathway nucleotide-sugar biosynthesis; UDP-N-acetyl-alpha-D-glucosamine biosynthesis; N-acetyl-alpha-D-glucosamine 1-phosphate from alpha-D-glucosamine 6-phosphate (route II): step 2/2. It participates in nucleotide-sugar biosynthesis; UDP-N-acetyl-alpha-D-glucosamine biosynthesis; UDP-N-acetyl-alpha-D-glucosamine from N-acetyl-alpha-D-glucosamine 1-phosphate: step 1/1. Its pathway is bacterial outer membrane biogenesis; LPS lipid A biosynthesis. In terms of biological role, catalyzes the last two sequential reactions in the de novo biosynthetic pathway for UDP-N-acetylglucosamine (UDP-GlcNAc). The C-terminal domain catalyzes the transfer of acetyl group from acetyl coenzyme A to glucosamine-1-phosphate (GlcN-1-P) to produce N-acetylglucosamine-1-phosphate (GlcNAc-1-P), which is converted into UDP-GlcNAc by the transfer of uridine 5-monophosphate (from uridine 5-triphosphate), a reaction catalyzed by the N-terminal domain. The protein is Bifunctional protein GlmU of Shewanella sp. (strain ANA-3).